The sequence spans 243 residues: Adenylate dimethylallyltransferase (243 aa).

It catalyses the reaction dimethylallyl diphosphate + AMP = N(6)-(dimethylallyl)adenosine 5'-phosphate + diphosphate. Its function is as follows. Transfers dimethylallyl groups to AMP as part of the biosynthesis of cytokinin phytohormones. In Agrobacterium fabrum (strain C58 / ATCC 33970) (Agrobacterium tumefaciens (strain C58)), this protein is Adenylate dimethylallyltransferase (tzs).